An 88-amino-acid polypeptide reads, in one-letter code: Small ribosomal subunit protein uS15 (88 aa).

Belongs to the universal ribosomal protein uS15 family. As to quaternary structure, part of the 30S ribosomal subunit. Forms a bridge to the 50S subunit in the 70S ribosome, contacting the 23S rRNA.

In terms of biological role, one of the primary rRNA binding proteins, it binds directly to 16S rRNA where it helps nucleate assembly of the platform of the 30S subunit by binding and bridging several RNA helices of the 16S rRNA. Its function is as follows. Forms an intersubunit bridge (bridge B4) with the 23S rRNA of the 50S subunit in the ribosome. This Francisella tularensis subsp. tularensis (strain FSC 198) protein is Small ribosomal subunit protein uS15.